The primary structure comprises 606 residues: KH domain-containing protein At4g18375 (606 aa).

A compositionally biased stretch (basic residues) spans 1–10; the sequence is MVERKKRKQI. The interval 1–26 is disordered; the sequence is MVERKKRKQIQRNNSESNRNQKRRIS. KH domains lie at 35-99, 138-210, 311-380, 394-455, and 535-599; these read LVVY…IGFT, NKEC…LFAV, ELVF…VEAV, NVKM…LIQI, and SSAL…ENLV.

Its subcellular location is the nucleus. The chain is KH domain-containing protein At4g18375 from Arabidopsis thaliana (Mouse-ear cress).